The primary structure comprises 154 residues: SsrA-binding protein (154 aa).

Belongs to the SmpB family.

It localises to the cytoplasm. In terms of biological role, required for rescue of stalled ribosomes mediated by trans-translation. Binds to transfer-messenger RNA (tmRNA), required for stable association of tmRNA with ribosomes. tmRNA and SmpB together mimic tRNA shape, replacing the anticodon stem-loop with SmpB. tmRNA is encoded by the ssrA gene; the 2 termini fold to resemble tRNA(Ala) and it encodes a 'tag peptide', a short internal open reading frame. During trans-translation Ala-aminoacylated tmRNA acts like a tRNA, entering the A-site of stalled ribosomes, displacing the stalled mRNA. The ribosome then switches to translate the ORF on the tmRNA; the nascent peptide is terminated with the 'tag peptide' encoded by the tmRNA and targeted for degradation. The ribosome is freed to recommence translation, which seems to be the essential function of trans-translation. In Synechocystis sp. (strain ATCC 27184 / PCC 6803 / Kazusa), this protein is SsrA-binding protein.